The following is a 529-amino-acid chain: Bifunctional purine biosynthesis protein PurH (529 aa).

The MGS-like domain occupies 1-146 (MAPTALLSVS…KNHAHVAVLT (146 aa)).

This sequence belongs to the PurH family.

The enzyme catalyses (6R)-10-formyltetrahydrofolate + 5-amino-1-(5-phospho-beta-D-ribosyl)imidazole-4-carboxamide = 5-formamido-1-(5-phospho-D-ribosyl)imidazole-4-carboxamide + (6S)-5,6,7,8-tetrahydrofolate. It catalyses the reaction IMP + H2O = 5-formamido-1-(5-phospho-D-ribosyl)imidazole-4-carboxamide. It functions in the pathway purine metabolism; IMP biosynthesis via de novo pathway; 5-formamido-1-(5-phospho-D-ribosyl)imidazole-4-carboxamide from 5-amino-1-(5-phospho-D-ribosyl)imidazole-4-carboxamide (10-formyl THF route): step 1/1. The protein operates within purine metabolism; IMP biosynthesis via de novo pathway; IMP from 5-formamido-1-(5-phospho-D-ribosyl)imidazole-4-carboxamide: step 1/1. This Synechococcus sp. (strain CC9311) protein is Bifunctional purine biosynthesis protein PurH.